The chain runs to 647 residues: MADISIKFPDGAVKAFPAGTTPADVAKSISISLAKKAVAAKLDGQLVDYLTPLASDGSIEIVTKDSDDGLTVLRNTTAALLRIALKKEFPAIRLGKVSADEDGFFVDTDKDDQQVSVDELDALAVIVEKLVSDKLDIERITVSKADALADAKDDQFTTALINAVDGDSVPFLKIGDYQILSDGAQLTNTGDVKKFKLLSVAGAYWQGKSSNPMLQRIYGTAFYKQADLDADLARRQEARERDHRVIGNQLDLFFVDPKVGAGLPYWMPNGATIRRTIERYIIDKEVSNGYQHVYTPVLANLDLYKQSGHWAHYREDMFPPMDMGDGEMLELRPMNCPSHIQVYNHHIRSYRELPLRIAELGMMHRYEKSGALSGLQRVREMTLNDGHTFVAPEQIQDEFKSILDLMVKVYADFDIKDYTFRLSYRDPKNTEKYFDDDEMWNNAQAMLKGAMDDLGLPYVEAEGEAAFYGPKLDVQTKTALGNEETLSTIQLDFMLPERFDLHYVGADGEEHRPVMIHRGLVSTMERFTAYLTEIYKGAFPTWLAPKQVTIIPVSEEKHGAYADKLAAELKAADIRVNVDKRGEKMGYLIRDAQTHKIPYTLVVGEDEMSNGSVSVRKYGENQTTSMSSDAFVKEILADIASYSREND.

The 63-residue stretch at 1-63 folds into the TGS domain; it reads MADISIKFPD…ASDGSIEIVT (63 aa). The catalytic stretch occupies residues 242-540; sequence DHRVIGNQLD…LTEIYKGAFP (299 aa). Zn(2+)-binding residues include Cys-336, His-387, and His-517.

The protein belongs to the class-II aminoacyl-tRNA synthetase family. Homodimer. Zn(2+) serves as cofactor.

It localises to the cytoplasm. The catalysed reaction is tRNA(Thr) + L-threonine + ATP = L-threonyl-tRNA(Thr) + AMP + diphosphate + H(+). Its function is as follows. Catalyzes the attachment of threonine to tRNA(Thr) in a two-step reaction: L-threonine is first activated by ATP to form Thr-AMP and then transferred to the acceptor end of tRNA(Thr). Also edits incorrectly charged L-seryl-tRNA(Thr). The sequence is that of Threonine--tRNA ligase from Levilactobacillus brevis (strain ATCC 367 / BCRC 12310 / CIP 105137 / JCM 1170 / LMG 11437 / NCIMB 947 / NCTC 947) (Lactobacillus brevis).